The primary structure comprises 144 residues: Small ribosomal subunit protein bS6 (144 aa).

Positions 95 to 144 (ELEEGPSAMMQSKSRDDRPRRGEGDDRPRRDDREDRPRRDREPRRMEGGE) are disordered. Over residues 107-144 (KSRDDRPRRGEGDDRPRRDDREDRPRRDREPRRMEGGE) the composition is skewed to basic and acidic residues.

This sequence belongs to the bacterial ribosomal protein bS6 family.

Binds together with bS18 to 16S ribosomal RNA. The sequence is that of Small ribosomal subunit protein bS6 from Paramagnetospirillum magneticum (strain ATCC 700264 / AMB-1) (Magnetospirillum magneticum).